The following is a 230-amino-acid chain: GDT1-like protein 4 (230 aa).

A run of 6 helical transmembrane segments spans residues 12–32 (LAMT…AILA), 39–59 (LVLA…ATLG), 71–91 (THHI…WDGF), 135–155 (AFLT…NFFG), 175–195 (FGVV…AVIG), and 207–227 (IVAL…YLTS).

The protein belongs to the GDT1 family.

The protein localises to the membrane. This chain is GDT1-like protein 4, found in Arabidopsis thaliana (Mouse-ear cress).